A 1325-amino-acid chain; its full sequence is Protein suppressor of sable (1325 aa).

2 disordered regions span residues 1-36 (MSVA…SKIQ) and 74-326 (VCLQ…GGSN). The span at 9–30 (PLIDLEEDLEDGEIDDDEEDEQ) shows a compositional bias: acidic residues. Over residues 119-131 (RSSNQDTSDQSLE) the composition is skewed to polar residues. Residues 138–327 (ATANPLLQST…GQEKMGGSNR (190 aa)) form a highly charged region. The segment covering 149–158 (SSRRRKRKKE) has biased composition (basic residues). A coiled-coil region spans residues 149 to 179 (SSRRRKRKKEREREQKKDKEQQNRSRRDEND). The span at 159–178 (REREQKKDKEQQNRSRRDEN) shows a compositional bias: basic and acidic residues. A compositionally biased stretch (gly residues) spans 236 to 246 (AGLGAGGGGGY). Positions 276-296 (NEKEHQRGVNNRKRRDRDRLE) form a coiled coil. C3H1-type zinc fingers lie at residues 330-357 (PRKL…HKEF) and 358-381 (PCKY…HGEP). A coiled-coil region spans residues 444-478 (KRQDHQMQQQQQQLQHQQLQQQQEQQQTQQQAAAD). Residues 499-509 (KRKSRWTEKMG) show a composition bias toward basic and acidic residues. 8 disordered regions span residues 499-535 (KRKS…LPPH), 588-622 (KAED…KSNG), 639-695 (FSGN…PSVF), 710-745 (SARQ…IGGG), 780-835 (AHSG…ALPP), 979-1058 (DLET…GGSK), 1143-1170 (EPNG…GGGV), and 1295-1325 (RGGH…NRNI). Phosphoserine is present on S524. Positions 594 to 606 (PQTQAELESSTPP) are enriched in polar residues. At T604 the chain carries Phosphothreonine. A compositionally biased stretch (acidic residues) spans 644 to 668 (PLDDDRDDDEQLIIDDGNDSTAEED). The residue at position 663 (S663) is a Phosphoserine. T664 carries the phosphothreonine modification. Residues 710 to 726 (SARQLLPASATSPNQEN) show a composition bias toward polar residues. The span at 790–800 (SNENSNSNSHS) shows a compositional bias: low complexity. The span at 1003–1015 (SVPPPSMRVPPPN) shows a compositional bias: pro residues. Positions 1021 to 1033 (PTVRTDPRRDPRR) are enriched in basic and acidic residues. Residues 1042–1056 (GASTANTTAPNASGG) show a composition bias toward low complexity. Gly residues-rich tracts occupy residues 1149–1170 (AALG…GGGV) and 1295–1309 (RGGH…GNGN).

It belongs to the suppressor of sable family. In terms of assembly, interacts with Wdr82.

It is found in the nucleus. It localises to the chromosome. Its function is as follows. RNA-binding protein that suppresses transcription of some RNAs. Together with Wdr82, part of a transcription termination checkpoint that promotes transcription termination of RNAs and their subsequent degradation by the nuclear exosome. Promotes transcription termination of aberrant RNAs, transcripts from genes containing a transposon inserted at their very 5' end or RNAs from heat-shock-inducible repetitive element. Binds RNA preferentially at a sequence that resembles a cryptic 5'-splice site. This is Protein suppressor of sable from Drosophila melanogaster (Fruit fly).